Reading from the N-terminus, the 364-residue chain is 3-isopropylmalate dehydrogenase (364 aa).

Gly77 to Glu90 serves as a coordination point for NAD(+). Arg97, Arg107, Arg135, and Asp224 together coordinate substrate. Residues Asp224, Asp248, and Asp252 each contribute to the Mg(2+) site. Gly281–Asn293 serves as a coordination point for NAD(+).

The protein belongs to the isocitrate and isopropylmalate dehydrogenases family. LeuB type 1 subfamily. As to quaternary structure, homodimer. Mg(2+) is required as a cofactor. Mn(2+) serves as cofactor.

The protein localises to the cytoplasm. It catalyses the reaction (2R,3S)-3-isopropylmalate + NAD(+) = 4-methyl-2-oxopentanoate + CO2 + NADH. Its pathway is amino-acid biosynthesis; L-leucine biosynthesis; L-leucine from 3-methyl-2-oxobutanoate: step 3/4. Functionally, catalyzes the oxidation of 3-carboxy-2-hydroxy-4-methylpentanoate (3-isopropylmalate) to 3-carboxy-4-methyl-2-oxopentanoate. The product decarboxylates to 4-methyl-2 oxopentanoate. The polypeptide is 3-isopropylmalate dehydrogenase (leuB) (Aquifex aeolicus (strain VF5)).